A 265-amino-acid polypeptide reads, in one-letter code: Shikimate dehydrogenase (NADP(+)) (265 aa).

Shikimate is bound by residues 15-17 (SLS) and threonine 62. The active-site Proton acceptor is the lysine 66. Glutamate 78 is an NADP(+) binding site. 2 residues coordinate shikimate: asparagine 87 and aspartate 102. NADP(+)-binding positions include 126–130 (GAGGV), 150–155 (NRTELK), and valine 210. A shikimate-binding site is contributed by tyrosine 212. Glycine 233 provides a ligand contact to NADP(+).

It belongs to the shikimate dehydrogenase family. In terms of assembly, homodimer.

The enzyme catalyses shikimate + NADP(+) = 3-dehydroshikimate + NADPH + H(+). It participates in metabolic intermediate biosynthesis; chorismate biosynthesis; chorismate from D-erythrose 4-phosphate and phosphoenolpyruvate: step 4/7. Its function is as follows. Involved in the biosynthesis of the chorismate, which leads to the biosynthesis of aromatic amino acids. Catalyzes the reversible NADPH linked reduction of 3-dehydroshikimate (DHSA) to yield shikimate (SA). The polypeptide is Shikimate dehydrogenase (NADP(+)) (Pelagibacter ubique (strain HTCC1062)).